Reading from the N-terminus, the 1671-residue chain is AF4/FMR2 family member lilli (1671 aa).

Disordered regions lie at residues Y53–I79, S126–V304, L393–W599, D723–G761, P774–H1162, and K1185–G1311. The segment covering R70–I79 has biased composition (basic and acidic residues). Composition is skewed to low complexity over residues S145–Q179 and P210–G242. T416 is subject to Phosphothreonine. Residues L424–S437 show a composition bias toward basic and acidic residues. Acidic residues predominate over residues L439 to D450. Phosphoserine is present on residues S446 and S448. Positions S459 to S479 are enriched in low complexity. Basic residues predominate over residues H487 to Q496. Low complexity-rich tracts occupy residues L497 to L522 and P561 to S587. Polar residues predominate over residues N588–W599. A compositionally biased stretch (low complexity) spans D723 to E755. Residues P774–V786 are compositionally biased toward polar residues. Basic residues predominate over residues Q800 to A810. 2 positions are modified to phosphoserine: S819 and S820. Residues K849–S861 constitute a DNA-binding region (a.T hook). A compositionally biased stretch (low complexity) spans Q858–A896. S869 and S871 each carry phosphoserine. Positions S907–T917 are enriched in polar residues. 2 stretches are compositionally biased toward low complexity: residues S947–S963 and A988–S1002. Over residues S1009–A1020 the composition is skewed to polar residues. Residues S1032 to S1058 show a composition bias toward low complexity. Residues E1063–K1080 are compositionally biased toward basic and acidic residues. Over residues Q1120–A1130 the composition is skewed to pro residues. The segment covering P1188–N1203 has biased composition (polar residues). Basic and acidic residues-rich tracts occupy residues E1224–F1241 and F1250–P1280. A Phosphoserine modification is found at S1360. T1362 is subject to Phosphothreonine. Residues N1562–N1581 are compositionally biased toward low complexity. Residues N1562 to R1586 form a disordered region.

This sequence belongs to the AF4 family.

The protein resides in the nucleus. Its function is as follows. Has a role in transcriptional regulation. Acts in parallel with the Ras/MAPK and the PI3K/PKB pathways in the control of cell identity and cellular growth. Essential for regulation of the cytoskeleton and cell growth but not for cell proliferation or growth rate. Required specifically for the microtubule-based basal transport of lipid droplets. Plays a partially redundant function downstream of Raf in cell fate specification in the developing eye. Pair-rule protein that regulates embryonic cellularization, gastrulation and segmentation. The chain is AF4/FMR2 family member lilli from Drosophila yakuba (Fruit fly).